The chain runs to 121 residues: uncharacterized protein (121 aa).

The next 3 membrane-spanning stretches (helical) occupy residues Tyr26–Thr46, Ser57–Ile77, and Ser90–Val110.

It is found in the membrane. This is an uncharacterized protein from Saccharomyces cerevisiae (strain ATCC 204508 / S288c) (Baker's yeast).